We begin with the raw amino-acid sequence, 264 residues long: S-adenosylmethionine decarboxylase proenzyme (264 aa).

Ser-113 (schiff-base intermediate with substrate; via pyruvic acid) is an active-site residue. Residue Ser-113 is modified to Pyruvic acid (Ser); by autocatalysis. His-118 functions as the Proton acceptor; for processing activity in the catalytic mechanism. Residue Cys-141 is the Proton donor; for catalytic activity of the active site.

It belongs to the prokaryotic AdoMetDC family. Type 2 subfamily. As to quaternary structure, heterooctamer of four alpha and four beta chains arranged as a tetramer of alpha/beta heterodimers. Pyruvate is required as a cofactor. Is synthesized initially as an inactive proenzyme. Formation of the active enzyme involves a self-maturation process in which the active site pyruvoyl group is generated from an internal serine residue via an autocatalytic post-translational modification. Two non-identical subunits are generated from the proenzyme in this reaction, and the pyruvate is formed at the N-terminus of the alpha chain, which is derived from the carboxyl end of the proenzyme. The post-translation cleavage follows an unusual pathway, termed non-hydrolytic serinolysis, in which the side chain hydroxyl group of the serine supplies its oxygen atom to form the C-terminus of the beta chain, while the remainder of the serine residue undergoes an oxidative deamination to produce ammonia and the pyruvoyl group blocking the N-terminus of the alpha chain.

It carries out the reaction S-adenosyl-L-methionine + H(+) = S-adenosyl 3-(methylsulfanyl)propylamine + CO2. It functions in the pathway amine and polyamine biosynthesis; S-adenosylmethioninamine biosynthesis; S-adenosylmethioninamine from S-adenosyl-L-methionine: step 1/1. Its function is as follows. Catalyzes the decarboxylation of S-adenosylmethionine to S-adenosylmethioninamine (dcAdoMet), the propylamine donor required for the synthesis of the polyamines spermine and spermidine from the diamine putrescine. This is S-adenosylmethionine decarboxylase proenzyme from Pseudomonas aeruginosa (strain UCBPP-PA14).